The following is a 228-amino-acid chain: Prolactin (228 aa).

The signal sequence occupies residues 1–29; it reads MGTKRSSLKGSLLLLLLMSSLFLFKSVES. A disulfide bridge connects residues Cys33 and Cys40. Phosphoserine is present on residues Ser55, Ser63, and Ser119. 2 disulfide bridges follow: Cys87–Cys203 and Cys220–Cys228.

The protein belongs to the somatotropin/prolactin family. Interacts with PRLR.

The protein resides in the secreted. Prolactin acts primarily on the mammary gland by promoting lactation, mammogenesis, mitogenesis and osmoregulation. The polypeptide is Prolactin (PRL) (Trichosurus vulpecula (Brush-tailed possum)).